We begin with the raw amino-acid sequence, 140 residues long: Profilin-2 (140 aa).

Residue alanine 2 is modified to N-acetylalanine.

Belongs to the profilin family. In terms of assembly, occurs in many kinds of cells as a complex with monomeric actin in a 1:1 ratio. Interacts with PFN2. Interacts with ACTMAP (via N-terminus); the interaction may facilitate efficient cleavage of the acetylated N-terminus of immature actin by ACTMAP. As to expression, highly expressed in brain, skeletal muscle and kidney and less strongly in heart, placenta, lung and liver.

Its subcellular location is the cytoplasm. It is found in the cytoskeleton. Binds to actin and affects the structure of the cytoskeleton. At high concentrations, profilin prevents the polymerization of actin, whereas it enhances it at low concentrations. By binding to PIP2, it inhibits the formation of IP3 and DG. This Homo sapiens (Human) protein is Profilin-2 (PFN2).